A 71-amino-acid chain; its full sequence is R-phycoerythrin gamma-1 chain, chloroplastic (71 aa).

Phycourobilin contacts are provided by cysteine 25 and cysteine 34. Residue cysteine 49 coordinates (2R,3E)-phycoerythrobilin. Cysteine 58 lines the phycourobilin pocket.

As to quaternary structure, heteromer of 6 alpha, 6 beta and 1 gamma chains. Post-translationally, contains four covalently linked bilin chromophores.

The protein localises to the plastid. It localises to the chloroplast thylakoid membrane. Functionally, critical for the incorporation of phycoerythrin in the phycobilisome complex. In Gastroclonium coulteri (Red alga), this protein is R-phycoerythrin gamma-1 chain, chloroplastic.